Consider the following 291-residue polypeptide: Probable cell wall amidase LytH (291 aa).

Positions 1–40 (MKKIEAWLSKKGLKNKRTLIVVIAFVLFIIFLFLLLNSNS) are cleaved as a signal peptide. Residues 41-105 (EDSGNITITE…WIAGWHTNLD (65 aa)) form the SH3b domain. The interval 118–140 (QGKTIVLDPGHGGSDQGASSNTK) is disordered. Positions 122–286 (IVLDPGHGGS…LEQAIVDGLK (165 aa)) constitute a MurNAc-LAA domain.

It belongs to the N-acetylmuramoyl-L-alanine amidase 3 family.

The protein localises to the secreted. Functionally, probably involved in cell-wall metabolism. The chain is Probable cell wall amidase LytH (lytH) from Staphylococcus aureus (strain USA300).